The primary structure comprises 346 residues: Histone PARylation factor 1 (346 aa).

An N-acetylmethionine modification is found at Met1. Residues Met1–Val23 form a disordered region. Position 19 is an N6-acetyllysine (Lys19). Position 97 is an ADP-ribosylserine (Ser97). 2 positions are modified to N6-acetyllysine: Lys186 and Lys233. Residue Asp235 is modified to PolyADP-ribosyl aspartic acid. Tyr238 carries the ADP-ribosyltyrosine modification. At Glu240 the chain carries PolyADP-ribosyl glutamic acid. The tract at residues Pro242–Ala346 is interaction with PARP1. Catalysis depends on Glu284, which acts as the Proton donor.

The protein belongs to the HPF1 family. Interacts with PARP1 (via the PARP catalytic domain). Interacts with PARP2 (via the PARP catalytic domain). Interacts with core nucleosomes in a PARP1- and PARP2-dependent manner.

It is found in the chromosome. Its subcellular location is the nucleus. In terms of biological role, cofactor for serine ADP-ribosylation that confers serine specificity on PARP1 and PARP2 and plays a key role in DNA damage response. Initiates the repair of double-strand DNA breaks: recruited to DNA damage sites by PARP1 and PARP2 and switches the amino acid specificity of PARP1 and PARP2 from aspartate or glutamate to serine residues, licensing serine ADP-ribosylation of target proteins. Serine ADP-ribosylation of target proteins, such as histones, promotes decompaction of chromatin and the recruitment of repair factors leading to the reparation of DNA strand breaks. Serine ADP-ribosylation of proteins constitutes the primary form of ADP-ribosylation of proteins in response to DNA damage. HPF1 acts by completing the active site of PARP1 and PARP2: forms a composite active site composed of residues from HPF1 and PARP1 or PARP2. While HPF1 promotes the initiation of serine ADP-ribosylation, it restricts the polymerase activity of PARP1 and PARP2 in order to limit the length of poly-ADP-ribose chains. HPF1 also promotes tyrosine ADP-ribosylation, probably by conferring tyrosine specificity on PARP1. In Homo sapiens (Human), this protein is Histone PARylation factor 1.